The chain runs to 329 residues: N-acetylmuramoyl-L-alanine amidase sle1 (329 aa).

The first 26 residues, 1–26 (MNKKILATAVLGTGALSTLFAHQAEA), serve as a signal peptide directing secretion. LysM domains are found at residues 28–71 (TTHT…VLKV), 88–131 (STYT…QLKV), and 152–195 (STYT…KLRV). The 125-residue stretch at 205 to 329 (STRSAQSTYY…YQVRNYKFIH (125 aa)) folds into the Peptidase C51 domain.

Its subcellular location is the secreted. It localises to the cell surface. The enzyme catalyses Hydrolyzes the link between N-acetylmuramoyl residues and L-amino acid residues in certain cell-wall glycopeptides.. Its function is as follows. Peptidoglycan hydrolase involved in the splitting of the septum during cell division. The protein is N-acetylmuramoyl-L-alanine amidase sle1 (sle1) of Staphylococcus haemolyticus (strain JCSC1435).